The chain runs to 487 residues: NADH-quinone oxidoreductase subunit N (487 aa).

The next 13 membrane-spanning stretches (helical) occupy residues 18–38 (LVPELVLIGGAFALLMLDLFV), 44–64 (VWTHLFSVAVLAVVLVLLATG), 84–104 (VMKTVIVLVSGLSLVYGWTYL), 116–136 (VLVLFATAGMMLLASAGSLLM), 169–189 (FVLGSLASGLLLYGMSLVYGA), 211–231 (LLTGTIFMIAGVAFKLGAAPF), 242–262 (APAPIALFISSAPKLAAFGMA), 277–297 (WHLLIGGLSAVSLVVGNLMAI), 305–325 (MLAYSTVSHIGFLLMGVAGGG), 333–353 (MFYAVSYTIMSTASFGAIIAL), 377–397 (AGLVLCIMASLAGIPPFLGFW), 410–430 (DMLWLALVGVICAVIGAYYYL), and 457–477 (VLGVNALALLALGLAWSPIMV).

The protein belongs to the complex I subunit 2 family. NDH-1 is composed of 14 different subunits. Subunits NuoA, H, J, K, L, M, N constitute the membrane sector of the complex.

The protein localises to the cell inner membrane. The catalysed reaction is a quinone + NADH + 5 H(+)(in) = a quinol + NAD(+) + 4 H(+)(out). Functionally, NDH-1 shuttles electrons from NADH, via FMN and iron-sulfur (Fe-S) centers, to quinones in the respiratory chain. The immediate electron acceptor for the enzyme in this species is believed to be ubiquinone. Couples the redox reaction to proton translocation (for every two electrons transferred, four hydrogen ions are translocated across the cytoplasmic membrane), and thus conserves the redox energy in a proton gradient. The chain is NADH-quinone oxidoreductase subunit N from Xanthomonas euvesicatoria pv. vesicatoria (strain 85-10) (Xanthomonas campestris pv. vesicatoria).